We begin with the raw amino-acid sequence, 423 residues long: UDP-N-acetylglucosamine 1-carboxyvinyltransferase 1 (423 aa).

23–24 (KN) is a binding site for phosphoenolpyruvate. R96 contributes to the UDP-N-acetyl-alpha-D-glucosamine binding site. C120 serves as the catalytic Proton donor. C120 bears the 2-(S-cysteinyl)pyruvic acid O-phosphothioketal mark. Positions 309 and 331 each coordinate UDP-N-acetyl-alpha-D-glucosamine.

Belongs to the EPSP synthase family. MurA subfamily.

It is found in the cytoplasm. The catalysed reaction is phosphoenolpyruvate + UDP-N-acetyl-alpha-D-glucosamine = UDP-N-acetyl-3-O-(1-carboxyvinyl)-alpha-D-glucosamine + phosphate. The protein operates within cell wall biogenesis; peptidoglycan biosynthesis. Its function is as follows. Cell wall formation. Adds enolpyruvyl to UDP-N-acetylglucosamine. The polypeptide is UDP-N-acetylglucosamine 1-carboxyvinyltransferase 1 (Streptococcus pyogenes serotype M3 (strain ATCC BAA-595 / MGAS315)).